A 150-amino-acid chain; its full sequence is Ribonuclease K6 (150 aa).

The N-terminal stretch at 1–23 (MVLCFPLLLLLLVLWGPVCLLHA) is a signal peptide. His38 serves as the catalytic Proton acceptor. Intrachain disulfides connect Cys46–Cys104, Cys60–Cys114, Cys78–Cys129, and Cys85–Cys92. A glycan (N-linked (GlcNAc...) asparagine) is linked at Asn55. Substrate is bound by residues 61–65 (KHQNT) and Lys86. Asn100 is a glycosylation site (N-linked (GlcNAc...) asparagine). Position 105 (Arg105) interacts with substrate. His145 serves as the catalytic Proton donor.

Belongs to the pancreatic ribonuclease family. In terms of assembly, interacts (via N-terminus) with bacterial lipopolysaccharide (LPS).

The protein localises to the secreted. Its subcellular location is the lysosome. The protein resides in the cytoplasmic granule. Its function is as follows. Ribonuclease which shows a preference for the pyrimidines uridine and cytosine. Has potent antibacterial activity against a range of Gram-positive and Gram-negative bacteria, including P.aeruginosa, A.baumanii, M.luteus, S.aureus, E.faecalis, E.faecium, S.saprophyticus and E.coli. Causes loss of bacterial membrane integrity, and also promotes agglutination of Gram-negative bacteria. Probably contributes to urinary tract sterility. Bactericidal activity is independent of RNase activity. In Miopithecus talapoin (Angolan talapoin), this protein is Ribonuclease K6 (RNASE6).